Reading from the N-terminus, the 491-residue chain is ATP synthase subunit beta, chloroplastic (491 aa).

ATP is bound at residue 172–179 (GGAGVGKT).

It belongs to the ATPase alpha/beta chains family. As to quaternary structure, F-type ATPases have 2 components, CF(1) - the catalytic core - and CF(0) - the membrane proton channel. CF(1) has five subunits: alpha(3), beta(3), gamma(1), delta(1), epsilon(1). CF(0) has four main subunits: a(1), b(1), b'(1) and c(9-12).

It is found in the plastid. Its subcellular location is the chloroplast thylakoid membrane. It carries out the reaction ATP + H2O + 4 H(+)(in) = ADP + phosphate + 5 H(+)(out). Functionally, produces ATP from ADP in the presence of a proton gradient across the membrane. The catalytic sites are hosted primarily by the beta subunits. This chain is ATP synthase subunit beta, chloroplastic, found in Pisum sativum (Garden pea).